Reading from the N-terminus, the 130-residue chain is Small ribosomal subunit protein uS8 (130 aa).

This sequence belongs to the universal ribosomal protein uS8 family. As to quaternary structure, part of the 30S ribosomal subunit. Contacts proteins S5 and S12.

One of the primary rRNA binding proteins, it binds directly to 16S rRNA central domain where it helps coordinate assembly of the platform of the 30S subunit. This Vibrio parahaemolyticus serotype O3:K6 (strain RIMD 2210633) protein is Small ribosomal subunit protein uS8.